Here is an 82-residue protein sequence, read N- to C-terminus: U17-hexatoxin-Hi1a (82 aa).

The signal sequence occupies residues 1 to 21; that stretch reads MKTIFAVTLLLFAIYVPECMP. Disulfide bonds link C22–C33, C27–C48, C32–C61, C58–C69, and C63–C75.

As to expression, expressed by the venom gland.

The protein localises to the secreted. Its function is as follows. Probable ion channel inhibitor. The protein is U17-hexatoxin-Hi1a of Hadronyche infensa (Fraser island funnel-web spider).